Reading from the N-terminus, the 313-residue chain is Coproporphyrin III ferrochelatase (313 aa).

Positions 191 and 270 each coordinate Fe(2+).

Belongs to the ferrochelatase family.

Its subcellular location is the cytoplasm. The enzyme catalyses Fe-coproporphyrin III + 2 H(+) = coproporphyrin III + Fe(2+). It participates in porphyrin-containing compound metabolism; protoheme biosynthesis. In terms of biological role, involved in coproporphyrin-dependent heme b biosynthesis. Catalyzes the insertion of ferrous iron into coproporphyrin III to form Fe-coproporphyrin III. This chain is Coproporphyrin III ferrochelatase, found in Enterococcus faecalis (strain ATCC 700802 / V583).